A 109-amino-acid polypeptide reads, in one-letter code: MPLYEFTFIAQQGLTQYELEGLVKGLSSLLTKNGAELLKYEYWGLLDFAYTIDKMNKGHYCMIYIKATPSSMDEFKRKVRLNEDVLRFLCLKKDKLPKGDSLMIQANQV.

This sequence belongs to the bacterial ribosomal protein bS6 family.

Functionally, binds together with bS18 to 16S ribosomal RNA. This Ehrlichia canis (strain Jake) protein is Small ribosomal subunit protein bS6.